A 565-amino-acid chain; its full sequence is Receptor-like serine/threonine-protein kinase NCRK (565 aa).

A signal peptide spans 1–23; the sequence is MKMRVETALAILLVLISIQQCYG. Topologically, residues 24–103 are extracellular; that stretch reads GVSNYTCTCF…SKKQYLSRKL (80 aa). N-linked (GlcNAc...) asparagine glycosylation is found at N27, N37, N45, N77, and N85. A helical membrane pass occupies residues 104 to 124; it reads VIVILLFCGVLISLAFLASMI. The Cytoplasmic segment spans residues 125 to 565; sequence CYICRKDKFS…PVLLEPSAHI (441 aa). The region spanning 210-495 is the Protein kinase domain; that stretch reads FSSNSVIGHG…REVVQILSTI (286 aa). Residues 216-224 and K238 contribute to the ATP site; that span reads IGHGGSSCV. Catalysis depends on D339, which acts as the Proton acceptor. A phosphothreonine mark is found at T378 and T383. Phosphotyrosine is present on Y391.

It belongs to the protein kinase superfamily. Ser/Thr protein kinase family. Interacts with ARAC5. Phosphorylated. Mostly expressed in leaf primordia, root and shoot apical meristems, lateral root primordia, and stele of older roots and hypocotyls. In leaves and cotyledons, highest levels observed in trichomes, vasculatures, and hydathode endothem.

It localises to the cell membrane. It is found in the prevacuolar compartment membrane. Its subcellular location is the endosome. The enzyme catalyses L-seryl-[protein] + ATP = O-phospho-L-seryl-[protein] + ADP + H(+). It catalyses the reaction L-threonyl-[protein] + ATP = O-phospho-L-threonyl-[protein] + ADP + H(+). In Arabidopsis thaliana (Mouse-ear cress), this protein is Receptor-like serine/threonine-protein kinase NCRK (NCRK).